The primary structure comprises 949 residues: Multimerin-2 (949 aa).

The N-terminal stretch at 1-22 (MILSLLFSLGGPLGWGLLGAWA) is a signal peptide. The 79-residue stretch at 54–132 (GRNWCPYPMS…PGYTGPNCEH (79 aa)) folds into the EMI domain. Intrachain disulfides connect cysteine 58–cysteine 122, cysteine 85–cysteine 92, and cysteine 121–cysteine 130. O-linked (Fuc...) serine glycosylation is present at serine 63. Threonine 67 carries an O-linked (Fuc) threonine glycan. An O-linked (Fuc) threonine glycan is attached at threonine 115. The segment at 133-157 (HDSMAIPEPADPGDSHQEPQDGPVS) is disordered. Residues 167–187 (INEVEVQQEQQEHLLGDLQND) are a coiled coil. Asparagine 205, asparagine 214, asparagine 249, asparagine 261, asparagine 350, asparagine 379, asparagine 439, and asparagine 472 each carry an N-linked (GlcNAc...) asparagine glycan. 3 coiled-coil regions span residues 292 to 487 (KFEA…DLIK), 547 to 596 (VDAH…HSAF), and 688 to 711 (EAATTALAGLARELQSLSNDVKNV). 2 N-linked (GlcNAc...) asparagine glycosylation sites follow: asparagine 727 and asparagine 765. Residues 779–801 (RKGKKQQKDLEAPRKRDKKEAEP) are disordered. A compositionally biased stretch (basic and acidic residues) spans 784–800 (QQKDLEAPRKRDKKEAE). A C1q domain is found at 821-949 (EAGSPVAFYA…AFGGFLMFKT (129 aa)). N-linked (GlcNAc...) asparagine glycosylation occurs at asparagine 845.

Heteromer of p110, p125, p140 and p200 subunits; disulfide-linked. Interacts with VEGFA. Interacts with CD93; this interaction promotes angiogenesis. Interacts with CD248. In terms of processing, N- and O-glycosylated. O-fucosylated within the EMI domain (at Ser-63, Thr-67 and Thr-115) by FUT10/POFUT3 and FUT11/POFUT4. Post-translationally, processed by matrix metalloproteinases (MMPs) including MMP9 and, to a lesser degree, by MMP2 upon angiogenic stimulation. As to expression, endothelium.

Its subcellular location is the secreted. The protein resides in the extracellular space. The protein localises to the extracellular matrix. Extracellular matrix protein that plays significant roles in the vascular system and is required for the maintenance and stability of blood vessel. Affects several essential steps in angiogenesis including endothelial cell proliferation, migration, and tube formation. Positively regulates angiogenesis by acting as a ligand for CD93 receptor. The protein is Multimerin-2 (MMRN2) of Homo sapiens (Human).